Here is a 95-residue protein sequence, read N- to C-terminus: Small ribosomal subunit protein uS14 (95 aa).

This sequence belongs to the universal ribosomal protein uS14 family. In terms of assembly, part of the 30S ribosomal subunit. Contacts proteins S3 and S10.

Functionally, binds 16S rRNA, required for the assembly of 30S particles and may also be responsible for determining the conformation of the 16S rRNA at the A site. The sequence is that of Small ribosomal subunit protein uS14 from Fusobacterium nucleatum subsp. nucleatum (strain ATCC 25586 / DSM 15643 / BCRC 10681 / CIP 101130 / JCM 8532 / KCTC 2640 / LMG 13131 / VPI 4355).